Consider the following 166-residue polypeptide: Deoxyuridine 5'-triphosphate nucleotidohydrolase (166 aa).

The segment at 1–24 (MACVNEPSPKLQKLDRNGIHGDSS) is disordered. A Mg(2+)-binding site is contributed by Glu138.

Belongs to the dUTPase family. In terms of assembly, homotrimer. Mg(2+) is required as a cofactor.

The catalysed reaction is dUTP + H2O = dUMP + diphosphate + H(+). The protein operates within pyrimidine metabolism; dUMP biosynthesis; dUMP from dCTP (dUTP route): step 2/2. Its function is as follows. This enzyme is involved in nucleotide metabolism: it produces dUMP, the immediate precursor of thymidine nucleotides and it decreases the intracellular concentration of dUTP, preventing uracil incorporation into DNA. The sequence is that of Deoxyuridine 5'-triphosphate nucleotidohydrolase (DUT) from Arabidopsis thaliana (Mouse-ear cress).